We begin with the raw amino-acid sequence, 624 residues long: D-3-phosphoglycerate dehydrogenase 2, chloroplastic (624 aa).

Residues 1–49 constitute a chloroplast transit peptide; it reads MAFSSSCSSVKAVNSRWTSPSPSPSSRFAVLPAFLHRRYATSVKLTAIS. Serine 71 is modified (phosphoserine). Residues 231–232, aspartate 251, 310–312, and aspartate 336 contribute to the NAD(+) site; these read KV and VAR. Arginine 312 is a catalytic residue. Residue glutamate 341 is part of the active site. Residue histidine 360 is the Proton donor of the active site. 360 to 363 is a binding site for NAD(+); it reads HLGA. One can recognise an ACT domain in the interval 552–624; the sequence is LILCRQVDQP…AIEEFVFLKL (73 aa).

It belongs to the D-isomer specific 2-hydroxyacid dehydrogenase family. In terms of tissue distribution, ubiquitous, but highly expressed in roots and in dark-grown leaf tissues. Expressed in the vasculature, stigma, anther filaments and shoot apical meristem. Not detected in the root meristem or in embryo.

Its subcellular location is the plastid. It is found in the chloroplast. The enzyme catalyses (2R)-3-phosphoglycerate + NAD(+) = 3-phosphooxypyruvate + NADH + H(+). It participates in amino-acid biosynthesis; L-serine biosynthesis; L-serine from 3-phospho-D-glycerate: step 1/3. Inhibited by 90 uM 3-phosphonooxypyruvate, but not by Ser, Thr, Val, Gly Trp, O-acetyl-L-Ser and Cys. Its function is as follows. Involved in the plastidial phosphorylated pathway of serine biosynthesis (PPSB). The polypeptide is D-3-phosphoglycerate dehydrogenase 2, chloroplastic (PGDH2) (Arabidopsis thaliana (Mouse-ear cress)).